The chain runs to 221 residues: Fructokinase (221 aa).

It belongs to the carbohydrate kinase PfkB family.

It carries out the reaction D-fructose + ATP = D-fructose 6-phosphate + ADP + H(+). The polypeptide is Fructokinase (scrK) (Salmonella thompson).